The chain runs to 146 residues: NADH-quinone oxidoreductase subunit A (146 aa).

3 consecutive transmembrane segments (helical) span residues 14-34 (FALFLIIAIGLCVFMLTGGFL), 68-88 (LVAMFFVIFDVEALYLYAWAV), and 96-116 (IGFIEATIFILVLLAGLIYLV).

It belongs to the complex I subunit 3 family. In terms of assembly, NDH-1 is composed of 13 different subunits. Subunits NuoA, H, J, K, L, M, N constitute the membrane sector of the complex.

It is found in the cell inner membrane. It carries out the reaction a quinone + NADH + 5 H(+)(in) = a quinol + NAD(+) + 4 H(+)(out). NDH-1 shuttles electrons from NADH, via FMN and iron-sulfur (Fe-S) centers, to quinones in the respiratory chain. The immediate electron acceptor for the enzyme in this species is believed to be ubiquinone. Couples the redox reaction to proton translocation (for every two electrons transferred, four hydrogen ions are translocated across the cytoplasmic membrane), and thus conserves the redox energy in a proton gradient. The sequence is that of NADH-quinone oxidoreductase subunit A from Pectobacterium atrosepticum (strain SCRI 1043 / ATCC BAA-672) (Erwinia carotovora subsp. atroseptica).